The sequence spans 289 residues: ATP synthase gamma chain (289 aa).

The protein belongs to the ATPase gamma chain family. As to quaternary structure, F-type ATPases have 2 components, CF(1) - the catalytic core - and CF(0) - the membrane proton channel. CF(1) has five subunits: alpha(3), beta(3), gamma(1), delta(1), epsilon(1). CF(0) has three main subunits: a, b and c.

It localises to the cell inner membrane. Produces ATP from ADP in the presence of a proton gradient across the membrane. The gamma chain is believed to be important in regulating ATPase activity and the flow of protons through the CF(0) complex. This Phocaeicola vulgatus (strain ATCC 8482 / DSM 1447 / JCM 5826 / CCUG 4940 / NBRC 14291 / NCTC 11154) (Bacteroides vulgatus) protein is ATP synthase gamma chain.